We begin with the raw amino-acid sequence, 284 residues long: tRNA dimethylallyltransferase (284 aa).

Residue 6–13 participates in ATP binding; it reads GPTASGKS. Residue 8 to 13 participates in substrate binding; it reads TASGKS. An interaction with substrate tRNA region spans residues 31-34; it reads DSLS.

Belongs to the IPP transferase family. In terms of assembly, monomer. The cofactor is Mg(2+).

The enzyme catalyses adenosine(37) in tRNA + dimethylallyl diphosphate = N(6)-dimethylallyladenosine(37) in tRNA + diphosphate. Its function is as follows. Catalyzes the transfer of a dimethylallyl group onto the adenine at position 37 in tRNAs that read codons beginning with uridine, leading to the formation of N6-(dimethylallyl)adenosine (i(6)A). This is tRNA dimethylallyltransferase from Nautilia profundicola (strain ATCC BAA-1463 / DSM 18972 / AmH).